The sequence spans 316 residues: 4-hydroxy-3-methylbut-2-enyl diphosphate reductase (316 aa).

Cys17 serves as a coordination point for [4Fe-4S] cluster. (2E)-4-hydroxy-3-methylbut-2-enyl diphosphate contacts are provided by His46 and His79. Positions 46 and 79 each coordinate dimethylallyl diphosphate. His46 and His79 together coordinate isopentenyl diphosphate. Residue Cys101 participates in [4Fe-4S] cluster binding. His129 contributes to the (2E)-4-hydroxy-3-methylbut-2-enyl diphosphate binding site. His129 contacts dimethylallyl diphosphate. Position 129 (His129) interacts with isopentenyl diphosphate. Residue Glu131 is the Proton donor of the active site. Thr170 serves as a coordination point for (2E)-4-hydroxy-3-methylbut-2-enyl diphosphate. Residue Cys200 participates in [4Fe-4S] cluster binding. (2E)-4-hydroxy-3-methylbut-2-enyl diphosphate contacts are provided by Ser228, Ser229, Asn230, and Ser273. Dimethylallyl diphosphate-binding residues include Ser228, Ser229, Asn230, and Ser273. Residues Ser228, Ser229, Asn230, and Ser273 each coordinate isopentenyl diphosphate.

It belongs to the IspH family. [4Fe-4S] cluster serves as cofactor.

It catalyses the reaction isopentenyl diphosphate + 2 oxidized [2Fe-2S]-[ferredoxin] + H2O = (2E)-4-hydroxy-3-methylbut-2-enyl diphosphate + 2 reduced [2Fe-2S]-[ferredoxin] + 2 H(+). The catalysed reaction is dimethylallyl diphosphate + 2 oxidized [2Fe-2S]-[ferredoxin] + H2O = (2E)-4-hydroxy-3-methylbut-2-enyl diphosphate + 2 reduced [2Fe-2S]-[ferredoxin] + 2 H(+). Its pathway is isoprenoid biosynthesis; dimethylallyl diphosphate biosynthesis; dimethylallyl diphosphate from (2E)-4-hydroxy-3-methylbutenyl diphosphate: step 1/1. The protein operates within isoprenoid biosynthesis; isopentenyl diphosphate biosynthesis via DXP pathway; isopentenyl diphosphate from 1-deoxy-D-xylulose 5-phosphate: step 6/6. Catalyzes the conversion of 1-hydroxy-2-methyl-2-(E)-butenyl 4-diphosphate (HMBPP) into a mixture of isopentenyl diphosphate (IPP) and dimethylallyl diphosphate (DMAPP). Acts in the terminal step of the DOXP/MEP pathway for isoprenoid precursor biosynthesis. The chain is 4-hydroxy-3-methylbut-2-enyl diphosphate reductase from Ruegeria pomeroyi (strain ATCC 700808 / DSM 15171 / DSS-3) (Silicibacter pomeroyi).